The primary structure comprises 530 residues: Alpha-(1,3)-fucosyltransferase 4 (530 aa).

2 disordered regions span residues 1–48 and 66–112; these read MRRL…RAVP and HLGG…STPA. Residues 1–147 lie on the Cytoplasmic side of the membrane; it reads MRRLWGAARK…GGRRGWRRGR (147 aa). Over residues 88 to 106 the composition is skewed to basic and acidic residues; the sequence is ASGERQRRLEPQLQHESRC. The helical; Signal-anchor for type II membrane protein transmembrane segment at 148-172 threads the bilayer; sequence GLPWTVCVLAAAGLTCTALITYACW. Residues 173–530 lie on the Lumenal side of the membrane; the sequence is GQLPPLPWAS…IRNLASWFER (358 aa). 2 N-linked (GlcNAc...) asparagine glycosylation sites follow: Asn-216 and Asn-315.

Belongs to the glycosyltransferase 10 family. Expressed at low levels in bone marrow-derived mesenchymal stem cells. In terms of tissue distribution, expressed in cord blood immature promyelocytes and in peripheral blood myeloid and lymphoid cell populations.

The protein resides in the golgi apparatus. It is found in the golgi stack membrane. It carries out the reaction a beta-D-galactosyl-(1-&gt;4)-N-acetyl-beta-D-glucosaminyl derivative + GDP-beta-L-fucose = a beta-D-galactosyl-(1-&gt;4)-[alpha-L-fucosyl-(1-&gt;3)]-N-acetyl-beta-D-glucosaminyl derivative + GDP + H(+). The catalysed reaction is an N-acetyl-alpha-neuraminyl-(2-&gt;3)-beta-D-galactosyl-(1-&gt;4)-N-acetyl-beta-D-glucosaminyl derivative + GDP-beta-L-fucose = an alpha-Neu5Ac-(2-&gt;3)-beta-D-Gal-(1-&gt;4)-[alpha-L-Fuc-(1-&gt;3)]-beta-D-GlcNAc derivative + GDP + H(+). It catalyses the reaction an alpha-Neu5Ac-(2-&gt;3)-beta-D-Gal-(1-&gt;4)-beta-D-GlcNAc-(1-&gt;3)-beta-D-Gal-(1-&gt;4)-beta-D-GlcNAc derivative + GDP-beta-L-fucose = an alpha-Neu5Ac-(2-&gt;3)-beta-D-Gal-(1-&gt;4)-beta-D-GlcNAc-(1-&gt;3)-beta-D-Gal-(1-&gt;4)-[alpha-L-Fuc-(1-&gt;3)]-beta-D-GlcNAc derivative + GDP + H(+). The enzyme catalyses an alpha-Neu5Ac-(2-&gt;3)-beta-D-Gal-(1-&gt;4)-beta-D-GlcNAc6S derivative + GDP-beta-L-fucose = an alpha-Neu5Ac-(2-&gt;3)-beta-D-Gal-(1-&gt;4)-[alpha-L-Fuc-(1-&gt;3)]-beta-D-GlcNAc6S derivative + GDP + H(+). It functions in the pathway protein modification; protein glycosylation. Its function is as follows. Catalyzes alpha(1-&gt;3) linkage of fucosyl moiety transferred from GDP-beta-L-fucose to N-acetyl glucosamine (GlcNAc) within type 2 lactosamine (LacNAc, Gal-beta(1-&gt;4)GlcNAc) glycan attached to N- or O-linked glycoproteins. Robustly fucosylates nonsialylated distal LacNAc unit of the polylactosamine chain to form Lewis X antigen (CD15), a glycan determinant known to mediate important cellular functions in development and immunity. Fucosylates with lower efficiency sialylated LacNAc acceptors to form sialyl Lewis X and 6-sulfo sialyl Lewis X determinants that serve as recognition epitopes for C-type lectins. Together with FUT7 contributes to SELE, SELL and SELP selectin ligand biosynthesis and selectin-dependent lymphocyte homing, leukocyte migration and blood leukocyte homeostasis. In a cell type specific manner, may also fucosylate the internal LacNAc unit of the polylactosamine chain to form VIM-2 antigen that serves as recognition epitope for SELE. Does not generate Lewis X antigens. This is Alpha-(1,3)-fucosyltransferase 4 from Homo sapiens (Human).